Reading from the N-terminus, the 381-residue chain is Alkanesulfonate monooxygenase (381 aa).

Belongs to the SsuD family. Homotetramer.

The catalysed reaction is an alkanesulfonate + FMNH2 + O2 = an aldehyde + FMN + sulfite + H2O + 2 H(+). In terms of biological role, catalyzes the desulfonation of aliphatic sulfonates. The chain is Alkanesulfonate monooxygenase from Escherichia coli O7:K1 (strain IAI39 / ExPEC).